The following is a 677-amino-acid chain: uncharacterized protein (677 aa).

3 helical membrane-spanning segments follow: residues 80-102 (ILSLFATLVLMVGVFFCAPRASF), 338-360 (ALLSNASGAFVIAQAVPVLLFGF), and 367-386 (LVAMVAVVTTFLLVFQLLSL). Residues 523 to 556 (DEAASLPSDSSPEEDLDPLEEVESIEGTAEESTR) are disordered. Residues 533–546 (SPEEDLDPLEEVES) are compositionally biased toward acidic residues.

It localises to the cell membrane. This is an uncharacterized protein from Treponema pallidum (strain Nichols).